A 1184-amino-acid chain; its full sequence is MFQLRNFEAIKIGLASPEKIREWSRGEVKKPETINYRTLKPERDGLFCERIFGPTKDWECHCGKYKRVRYKGVVCDRCGVEVTRSKVRRERMGHIELAAPVAHIWYVKGIPSRMGLLLDMSPRALEKVLYFVSYVVIDPGDTPLTKKQLLSEKEYRDYLDKYGNRFRAGMGAEAIKELLQEIDLEKLSKELRAEIRESTGQKRVRAIRRLEVVQAFIDSGNRPEWMILDVIPVIPPDLRPMVQLDGGRFATSDLNDLYRRVINRNNRLKKLLDLGAPDIIVRNEKRMLQEAVDALIDNGRRGRPVTGPGNRPLKSLSDMLKGKQGRFRQNLLGKRVDYSGRSVIVVGPELKVYQCGLPKEMALELFKPFVMKKLVDEGLAQHIKSAKRMVEKVKPEVWDVLEEVIKEHPVLLNRAPTLHRLGIQAFEPVLVEGRAIKLHPLVCTAYNADFDGDQMAVHVPLSMEAQAEARFLMLAANNILKPQDGKPVMTPTQDMVLGCYYLTADEEGVPGEGKYFSSPEEAIMAYQLGYIHIHAKIKVKMTKEIDGVKKSKIIETTVGKIIFNEAIPQDLGYVDRTNPETAFDLEINDLVDKSKLGKILDRVYRLHGPTKTAETLDKIKELGFRYSTKAAITVSVSDMVIPKEKEKLLKEADEMVSKIESQFRRGLISEEERYESVIRTWNMTTEKVTEALMASLDKFNPIFMMAHSGARGSKNQIRQLAGMRGLMADPSGRIIELPIRSNFREGLNVLEFFISTHGARKGLADTALRTADSGYLTRRLVDVSQDVIVREDDCGADEGIYVEEIREGNEIIEKLADRIIGRVAAEDVIDNEGNIIVRRNELINEEEAEKIEKAGITKVRIRSLLTCKSRHGVCRMCYGRDLATGELVNIGEAVGIIAAQAIGEPGTQLTMRTFHTGGVAGADITQGLPRVEELFEARKPKGLAVISEISGVVRINESKKRREVIVTDEENNISKTYLIPYGSRLKVHDGQVIQAGDELTEGSVNPHDLLKIKGIFAVQTYLLQEVQKVYRLQGVEINDKHIEVIIRQMMRKVKVEDPGDTSMLPGELIDMFKFEDENKKAIEKGLRPATGRRALLGITKAALATDSFLSAASFQETTRVLTDAAIKGKVDPLLGLKENVIIGKLIPAGTGLSRYRNISVVKKVNDQQERQDKEKEETEVKASN.

Residues cysteine 60, cysteine 62, cysteine 75, and cysteine 78 each contribute to the Zn(2+) site. Mg(2+)-binding residues include aspartate 449, aspartate 451, and aspartate 453. Positions 794, 867, 874, and 877 each coordinate Zn(2+). Residues asparagine 1165–asparagine 1184 are disordered.

The protein belongs to the RNA polymerase beta' chain family. As to quaternary structure, the RNAP catalytic core consists of 2 alpha, 1 beta, 1 beta' and 1 omega subunit. When a sigma factor is associated with the core the holoenzyme is formed, which can initiate transcription. Requires Mg(2+) as cofactor. The cofactor is Zn(2+).

The enzyme catalyses RNA(n) + a ribonucleoside 5'-triphosphate = RNA(n+1) + diphosphate. In terms of biological role, DNA-dependent RNA polymerase catalyzes the transcription of DNA into RNA using the four ribonucleoside triphosphates as substrates. This Thermoanaerobacter pseudethanolicus (strain ATCC 33223 / 39E) (Clostridium thermohydrosulfuricum) protein is DNA-directed RNA polymerase subunit beta'.